A 1404-amino-acid polypeptide reads, in one-letter code: DNA-directed RNA polymerase subunit beta' (1404 aa).

Zn(2+)-binding residues include Cys70, Cys72, Cys85, and Cys88. 3 residues coordinate Mg(2+): Asp460, Asp462, and Asp464. Residues Cys814, Cys889, Cys896, and Cys899 each coordinate Zn(2+).

The protein belongs to the RNA polymerase beta' chain family. As to quaternary structure, the RNAP catalytic core consists of 2 alpha, 1 beta, 1 beta' and 1 omega subunit. When a sigma factor is associated with the core the holoenzyme is formed, which can initiate transcription. Mg(2+) serves as cofactor. The cofactor is Zn(2+).

It catalyses the reaction RNA(n) + a ribonucleoside 5'-triphosphate = RNA(n+1) + diphosphate. Its function is as follows. DNA-dependent RNA polymerase catalyzes the transcription of DNA into RNA using the four ribonucleoside triphosphates as substrates. The polypeptide is DNA-directed RNA polymerase subunit beta' (Xanthomonas axonopodis pv. citri (strain 306)).